The chain runs to 1072 residues: MPKYKDINKVLVIGSGPIIIGQAAEFDYSGTQACKSLKEEGVQVVLVNNNPATIMTDTDIADIVYIENPTVSVVEKIIAKERPEGILATLGGQTGLNLAVKLKEEGILDKYNVKLLGTSFESIKTAEDRELFKRKMQEIGEPVAESVTVTNIEDALKFAKNYGYPLIIRPAYTLGGTGGGIAHNDEELISIVDLGLKKSMVGEVLVEKSLYGWKEIEFEVMRDAADNCITICSMENFDPVGVHTGDSIVVAPTQTLSDYEYQMLRSASIKIIKALKIEGGCNIQFALDPKSHKYYVIEVNPRVSRSSALASKATGYPIAKIAAKIAIGLRLDEIKNPVTGKTTAFFEPALDYVVTKIPRWPFDKFYTTDRKIGTQMKATGEVMAIERSFEASLLKAVRSLEIKAYGLRLNNVKAMKTEEILKGISVPNDMRLFYIAEALRRDIDIDYINEVTKIDKWFLNKLLNIVNMEREVEKSELSEGILKKAKRMGFSDREIATIKGIKEEDVRMLRKQHGIYPSYKMVDTCAAEFESVTQYIYSTYGEEDEVEIHDMPKVIVIGSGPIRIGQGIEFDYCSVKALWALREAGIKSIIINNNPETVSTDFDTGDRLYFEPITLEDVLNIYEKEKPLGVMVMFGGQTAINLTEGLVKNRVKILGTSYESIDISEDREKFSKLLRELNINQPKGDYALTVEDAKDIALKLGFPLLIRPSYVIGGQSMEKVNTLQEIIDYVSNATQVSPGRPILIDKYIDGREVEVDAVSDGECVLIPGIMEHIERAGVHSGDSFSIYPARNLSEREINTIIEYTERISKALNVKGLINIQFAVKEGTVYVLEVNPRASRTVPIMSKATGVPMVKLAVEVALGKKLKELGYKSGLWPQTPYTVVKAPVFSMEKLTDAEVSLGPEMKSTGEIMGIDLSYEGALYKALEGAGLKIPKKGKILLSIAERDFQEVPSLVEKLQSLGYEIYATYRTGKYLSLMGIHVNVISLDNAIKLLKDGYFDAVINTPTKGKKPDNTGFKLRRTAVEYRIPLFTSMDTIKAALNAVAKVNVNGLSILSINEYEEIQKDNVKNLVL.

The carboxyphosphate synthetic domain stretch occupies residues 1-401 (MPKYKDINKV…SLLKAVRSLE (401 aa)). ATP contacts are provided by R129, R169, G175, G176, K208, L210, E215, G241, V242, H243, Q284, and E298. The ATP-grasp 1 domain occupies 133–327 (KRKMQEIGEP…IAKIAAKIAI (195 aa)). The Mg(2+) site is built by Q284, E298, and N300. Residues Q284, E298, and N300 each contribute to the Mn(2+) site. Positions 402–544 (IKAYGLRLNN…YIYSTYGEED (143 aa)) are oligomerization domain. A carbamoyl phosphate synthetic domain region spans residues 545–929 (EVEIHDMPKV…ALYKALEGAG (385 aa)). In terms of domain architecture, ATP-grasp 2 spans 671–861 (SKLLRELNIN…MVKLAVEVAL (191 aa)). Residues R707, K746, I748, E752, G777, V778, H779, S780, Q820, and E832 each coordinate ATP. Mg(2+) is bound by residues Q820, E832, and N834. The Mn(2+) site is built by Q820, E832, and N834. The MGS-like domain maps to 930–1072 (LKIPKKGKIL…QKDNVKNLVL (143 aa)). The allosteric domain stretch occupies residues 930–1072 (LKIPKKGKIL…QKDNVKNLVL (143 aa)).

Belongs to the CarB family. As to quaternary structure, composed of two chains; the small (or glutamine) chain promotes the hydrolysis of glutamine to ammonia, which is used by the large (or ammonia) chain to synthesize carbamoyl phosphate. Tetramer of heterodimers (alpha,beta)4. Mg(2+) is required as a cofactor. Mn(2+) serves as cofactor.

The catalysed reaction is hydrogencarbonate + L-glutamine + 2 ATP + H2O = carbamoyl phosphate + L-glutamate + 2 ADP + phosphate + 2 H(+). It catalyses the reaction hydrogencarbonate + NH4(+) + 2 ATP = carbamoyl phosphate + 2 ADP + phosphate + 2 H(+). Its pathway is amino-acid biosynthesis; L-arginine biosynthesis; carbamoyl phosphate from bicarbonate: step 1/1. The protein operates within pyrimidine metabolism; UMP biosynthesis via de novo pathway; (S)-dihydroorotate from bicarbonate: step 1/3. Large subunit of the glutamine-dependent carbamoyl phosphate synthetase (CPSase). CPSase catalyzes the formation of carbamoyl phosphate from the ammonia moiety of glutamine, carbonate, and phosphate donated by ATP, constituting the first step of 2 biosynthetic pathways, one leading to arginine and/or urea and the other to pyrimidine nucleotides. The large subunit (synthetase) binds the substrates ammonia (free or transferred from glutamine from the small subunit), hydrogencarbonate and ATP and carries out an ATP-coupled ligase reaction, activating hydrogencarbonate by forming carboxy phosphate which reacts with ammonia to form carbamoyl phosphate. In Thermoanaerobacter pseudethanolicus (strain ATCC 33223 / 39E) (Clostridium thermohydrosulfuricum), this protein is Carbamoyl phosphate synthase large chain.